A 1090-amino-acid polypeptide reads, in one-letter code: Exoglucanase B (1090 aa).

Positions 1 to 33 (MSSTTRRRSAWVAAATVGVSSFLAVAGITPAIA) are cleaved as a signal peptide. A propeptide spanning residues 34 to 53 (AAGAGQPATVTVPAASPVRA) is cleaved from the precursor. Residues 54 to 699 (AVDGEYAQRF…RLFDDGTTTP (646 aa)) form a catalytic region. The active-site Nucleophile is the Asp-513. 3 Fibronectin type-III domains span residues 706-791 (VPTG…TKAT), 797-887 (APSV…TKSD), and 897-984 (VPAG…TKTP). One can recognise a CBM2 domain in the interval 983-1090 (TPQTGGSCSV…SFTLNGASCT (108 aa)). Cysteines 990 and 1089 form a disulfide. Residues 1069–1090 (NGSHTGQNPNPASFTLNGASCT) form a disordered region. The segment covering 1070–1090 (GSHTGQNPNPASFTLNGASCT) has biased composition (polar residues).

Belongs to the glycosyl hydrolase 48 (cellulase L) family.

The catalysed reaction is Hydrolysis of (1-&gt;4)-beta-D-glucosidic linkages in cellulose and cellotetraose, releasing cellobiose from the non-reducing ends of the chains.. Hydrolyzes cellohexaose to a mixture of cellotetraose, cellotriose and cellobiose, with only a trace of glucose. It hydrolyzed cellopentaose to cellotriose and cellobiose, and cellotetraose to cellobiose, but it did not hydrolyze cellotriose. Also has weak endoglucanase activity. Hydrolyzes glucosidic bonds with inversion of anomeric configuration. The protein is Exoglucanase B (cbhB) of Cellulomonas fimi (strain ATCC 484 / DSM 20113 / JCM 1341 / CCUG 24087 / LMG 16345 / NBRC 15513 / NCIMB 8980 / NCTC 7547 / NRS-133).